Reading from the N-terminus, the 584-residue chain is MATAAATQSQPVRVVLRVRPHLPSEANSAEAPCVGLLGSHPGGEVTVQLKDQYTSRNECYKLDAFFGQESRVCEIFDQEVSAVIPGIFEGTNATVFAYGATGSGKTYTMQGTEDLPGLIPLAVSTVLALCTGTWCSVEISYYEVYMERCYDLLEPKAREIMVLDDKDGNLQLKGLAWVPVRSLEEFHEIYSIGVQRRKVAHTGLNDVSSRSHAVLSIRITTDVVKGKLNLIDLAGNEDNRRTCNEGIRLQESAKINQSLFALSNVISALNKKEPRIPYRESKLTRILQDSLGGNSHAVMIACLNPVEYQEAVHTVSLAARSRHVTNHMSSASKQETPKDKVDMEAKLRAWLESKGKTKSIQRMDGLLSPNAIKTPLSMSHKKQSASGRVSGRGKAMDQDGGKIKKVLFDSAARIPAENFHREGTQDIVNTTKKVVLPSLTPCKEDKTGSSLRKALSPISSNMDPQKQRTADDSNCLMLLELRTPMGSCNIVGKVTGATPLDKFIALGSNLKESLIQQYLDFLNVANKEELQKLKGIGERRAEYILELREDSPRPFKSLSDLGNIGLSSKQIQDILCKTATGIFK.

Residues 11–324 (PVRVVLRVRP…VSLAARSRHV (314 aa)) form the Kinesin motor domain. 99 to 106 (GATGSGKT) contributes to the ATP binding site. Disordered stretches follow at residues 377–398 (SMSHKKQSASGRVSGRGKAMDQ) and 445–469 (DKTGSSLRKALSPISSNMDPQKQRT).

This sequence belongs to the TRAFAC class myosin-kinesin ATPase superfamily. Kinesin family. KIN-10 subfamily.

The chain is Kinesin-like protein KIN-10C from Oryza sativa subsp. japonica (Rice).